Here is an 868-residue protein sequence, read N- to C-terminus: Leucine--tRNA ligase (868 aa).

The 'HIGH' region motif lies at 42 to 52 (PYPSGKLHMGH). The short motif at 627–631 (KMAKS) is the 'KMSKS' region element. Lys-630 is an ATP binding site.

It belongs to the class-I aminoacyl-tRNA synthetase family.

It is found in the cytoplasm. It carries out the reaction tRNA(Leu) + L-leucine + ATP = L-leucyl-tRNA(Leu) + AMP + diphosphate. In Pseudomonas fluorescens (strain ATCC BAA-477 / NRRL B-23932 / Pf-5), this protein is Leucine--tRNA ligase.